The chain runs to 398 residues: Phospholipase C (398 aa).

An N-terminal signal peptide occupies residues 1–28; the sequence is MKRKICKALICAALATSLWAGASTKVYA. The Zn(2+) site is built by W29, H39, D84, H96, H154, D158, H164, H176, and E180. Residues 29-278 enclose the Zn-dependent PLC domain; the sequence is WDGKIDGTGT…HDVSEGNDPS (250 aa). The segment at 275–283 is linker; it reads NDPSVGKNV. The PLAT domain occupies 284–398; sequence KELVAYISTS…ISGNSTYNIK (115 aa). Positions 297, 299, 300, 301, 321, 322, 324, 325, 326, 364, and 365 each coordinate Ca(2+).

It belongs to the bacterial zinc-metallophospholipase C family. Ca(2+) serves as cofactor. Zn(2+) is required as a cofactor.

The protein resides in the secreted. The catalysed reaction is a 1,2-diacyl-sn-glycero-3-phosphocholine + H2O = phosphocholine + a 1,2-diacyl-sn-glycerol + H(+). In terms of biological role, bacterial hemolysins are exotoxins that attack blood cell membranes and cause cell rupture. Constitutes an essential virulence factor in gas gangrene. Binds to eukaryotic membranes where it hydrolyzes both phosphatidylcholine and sphingomyelin. The diacylglycerol produced can activate both the arachidonic acid pathway, leading to modulation of the inflammatory response cascade and thrombosis, and protein kinase C, leading to activation of eukaryotic phospholipases and further membrane damage. Acts on human and mouse erythrocytes, but not on rabbit or horse erythrocytes. In Clostridium perfringens (strain ATCC 13124 / DSM 756 / JCM 1290 / NCIMB 6125 / NCTC 8237 / Type A), this protein is Phospholipase C (plc).